Consider the following 376-residue polypeptide: Cellular tumor antigen p53 (376 aa).

The tract at residues 1–36 (MEGNGERDTMMVEPPDSQEFAELWLRNLIVRDNSLW) is transcription activation (acidic). The DNA-binding element occupies 77 to 268 (DYPGLLNFTL…KTEESNFKKQ (192 aa)). The span at 150-159 (RCPHHERSND) shows a compositional bias: basic and acidic residues. A disordered region spans residues 150–171 (RCPHHERSNDSSDGPAPPGHLL). Cys151, His154, Cys214, and Cys218 together coordinate Zn(2+). The tract at residues 249–256 (RVCACPGR) is interaction with DNA. Basic and acidic residues-rich tracts occupy residues 257–270 (DRKT…KQQE) and 282–294 (SMKD…EASK). The segment at 257 to 306 (DRKTEESNFKKQQEPKTSGKTLTKRSMKDPPSHPEASKKSKNSSSDDEIY) is disordered. Residues 280–297 (KRSMKDPPSHPEASKKSK) carry the Bipartite nuclear localization signal motif. The interval 303-334 (DEIYTLQVRGKERYEFLKKINDGLELSDVVPP) is oligomerization. A Nuclear export signal motif is present at residues 317 to 328 (EFLKKINDGLEL). The tract at residues 342–376 (QKLLSKTCRKERDGAAGEPKRGKKRLVKEEKCDSD) is disordered. The segment at 347–372 (KTCRKERDGAAGEPKRGKKRLVKEEK) is basic (repression of DNA-binding). The span at 349-361 (CRKERDGAAGEPK) shows a compositional bias: basic and acidic residues.

This sequence belongs to the p53 family. As to quaternary structure, binds DNA as a homotetramer. Zn(2+) serves as cofactor.

Its subcellular location is the cytoplasm. The protein localises to the nucleus. Its function is as follows. Multifunctional transcription factor that induces cell cycle arrest, DNA repair or apoptosis upon binding to its target DNA sequence. Acts as a tumor suppressor in many tumor types; induces growth arrest or apoptosis depending on the physiological circumstances and cell type. Negatively regulates cell division by controlling expression of a set of genes required for this process. One of the activated genes is an inhibitor of cyclin-dependent kinases. Apoptosis induction seems to be mediated either by stimulation of BAX and FAS antigen expression, or by repression of Bcl-2 expression. This Ictalurus punctatus (Channel catfish) protein is Cellular tumor antigen p53 (tp53).